The following is a 498-amino-acid chain: ATP synthase subunit beta, chloroplastic (498 aa).

An ATP-binding site is contributed by Gly-172 to Thr-179.

The protein belongs to the ATPase alpha/beta chains family. As to quaternary structure, F-type ATPases have 2 components, CF(1) - the catalytic core - and CF(0) - the membrane proton channel. CF(1) has five subunits: alpha(3), beta(3), gamma(1), delta(1), epsilon(1). CF(0) has four main subunits: a(1), b(1), b'(1) and c(9-12).

It is found in the plastid. It localises to the chloroplast thylakoid membrane. It carries out the reaction ATP + H2O + 4 H(+)(in) = ADP + phosphate + 5 H(+)(out). In terms of biological role, produces ATP from ADP in the presence of a proton gradient across the membrane. The catalytic sites are hosted primarily by the beta subunits. The protein is ATP synthase subunit beta, chloroplastic of Whiteheadia bifolia (Elephants ears).